The sequence spans 290 residues: NH(3)-dependent NAD(+) synthetase (290 aa).

Residue 33–40 coordinates ATP; the sequence is GVSGGVDS. Aspartate 39 provides a ligand contact to Mg(2+). Arginine 154 contacts deamido-NAD(+). Residue threonine 174 coordinates ATP. Glutamate 179 contributes to the Mg(2+) binding site. Lysine 187 and aspartate 194 together coordinate deamido-NAD(+). Lysine 203 and serine 225 together coordinate ATP.

Belongs to the NAD synthetase family. Homodimer.

The enzyme catalyses deamido-NAD(+) + NH4(+) + ATP = AMP + diphosphate + NAD(+) + H(+). The protein operates within cofactor biosynthesis; NAD(+) biosynthesis; NAD(+) from deamido-NAD(+) (ammonia route): step 1/1. Its function is as follows. Catalyzes the ATP-dependent amidation of deamido-NAD to form NAD. Uses ammonia as a nitrogen source. The polypeptide is NH(3)-dependent NAD(+) synthetase (Thermotoga neapolitana (strain ATCC 49049 / DSM 4359 / NBRC 107923 / NS-E)).